We begin with the raw amino-acid sequence, 214 residues long: Ribosomal RNA large subunit methyltransferase E (214 aa).

Residues Gly-68, Trp-70, Asp-88, Asp-104, and Asp-129 each contribute to the S-adenosyl-L-methionine site. The active-site Proton acceptor is Lys-169.

This sequence belongs to the class I-like SAM-binding methyltransferase superfamily. RNA methyltransferase RlmE family.

It localises to the cytoplasm. The enzyme catalyses uridine(2552) in 23S rRNA + S-adenosyl-L-methionine = 2'-O-methyluridine(2552) in 23S rRNA + S-adenosyl-L-homocysteine + H(+). Its function is as follows. Specifically methylates the uridine in position 2552 of 23S rRNA at the 2'-O position of the ribose in the fully assembled 50S ribosomal subunit. The chain is Ribosomal RNA large subunit methyltransferase E from Magnetococcus marinus (strain ATCC BAA-1437 / JCM 17883 / MC-1).